The primary structure comprises 765 residues: 5-methyltetrahydropteroyltriglutamate--homocysteine methyltransferase 2 (765 aa).

Residues Lys18 and Asn116 each contribute to the 5-methyltetrahydropteroyltri-L-glutamate site. L-homocysteine is bound by residues 437–439 (IGS) and Glu490. L-methionine contacts are provided by residues 437-439 (IGS) and Glu490. 5-methyltetrahydropteroyltri-L-glutamate is bound by residues Asp495, Tyr518, 521-522 (RC), and Trp567. Asp605 lines the L-homocysteine pocket. Residue Asp605 participates in L-methionine binding. 5 residues coordinate Zn(2+): His647, Cys649, His658, Asp662, and Glu671. The active-site Proton donor is the His701. A Zn(2+)-binding site is contributed by Cys733.

The protein belongs to the vitamin-B12 independent methionine synthase family. It depends on Zn(2+) as a cofactor. In terms of tissue distribution, expressed in leaves, stems and siliques.

The protein localises to the cytoplasm. It localises to the cytosol. It catalyses the reaction 5-methyltetrahydropteroyltri-L-glutamate + L-homocysteine = tetrahydropteroyltri-L-glutamate + L-methionine. It participates in amino-acid biosynthesis; L-methionine biosynthesis via de novo pathway; L-methionine from L-homocysteine (MetE route): step 1/1. Functionally, catalyzes the transfer of a methyl group from 5-methyltetrahydrofolate to homocysteine resulting in methionine formation. The polypeptide is 5-methyltetrahydropteroyltriglutamate--homocysteine methyltransferase 2 (MS2) (Arabidopsis thaliana (Mouse-ear cress)).